The primary structure comprises 914 residues: Protein translocase subunit SecA (914 aa).

ATP-binding positions include Gln-86, 104 to 108, and Asp-512; that span reads GEGKT. Cys-898, Cys-900, Cys-909, and His-910 together coordinate Zn(2+).

It belongs to the SecA family. In terms of assembly, monomer and homodimer. Part of the essential Sec protein translocation apparatus which comprises SecA, SecYEG and auxiliary proteins SecDF-YajC and YidC. It depends on Zn(2+) as a cofactor.

The protein resides in the cell inner membrane. It is found in the cytoplasm. The enzyme catalyses ATP + H2O + cellular proteinSide 1 = ADP + phosphate + cellular proteinSide 2.. Part of the Sec protein translocase complex. Interacts with the SecYEG preprotein conducting channel. Has a central role in coupling the hydrolysis of ATP to the transfer of proteins into and across the cell membrane, serving both as a receptor for the preprotein-SecB complex and as an ATP-driven molecular motor driving the stepwise translocation of polypeptide chains across the membrane. The chain is Protein translocase subunit SecA from Bordetella petrii (strain ATCC BAA-461 / DSM 12804 / CCUG 43448).